A 70-amino-acid chain; its full sequence is ATP synthase subunit c (70 aa).

Transmembrane regions (helical) follow at residues 4–24 (IATA…NGLI) and 47–67 (FIGI…GFLL).

This sequence belongs to the ATPase C chain family. F-type ATPases have 2 components, F(1) - the catalytic core - and F(0) - the membrane proton channel. F(1) has five subunits: alpha(3), beta(3), gamma(1), delta(1), epsilon(1). F(0) has three main subunits: a(1), b(2) and c(10-14). The alpha and beta chains form an alternating ring which encloses part of the gamma chain. F(1) is attached to F(0) by a central stalk formed by the gamma and epsilon chains, while a peripheral stalk is formed by the delta and b chains.

The protein localises to the cell membrane. Functionally, f(1)F(0) ATP synthase produces ATP from ADP in the presence of a proton or sodium gradient. F-type ATPases consist of two structural domains, F(1) containing the extramembraneous catalytic core and F(0) containing the membrane proton channel, linked together by a central stalk and a peripheral stalk. During catalysis, ATP synthesis in the catalytic domain of F(1) is coupled via a rotary mechanism of the central stalk subunits to proton translocation. Key component of the F(0) channel; it plays a direct role in translocation across the membrane. A homomeric c-ring of between 10-14 subunits forms the central stalk rotor element with the F(1) delta and epsilon subunits. The sequence is that of ATP synthase subunit c from Exiguobacterium sibiricum (strain DSM 17290 / CCUG 55495 / CIP 109462 / JCM 13490 / 255-15).